The following is a 449-amino-acid chain: Bifunctional protein GlmU (449 aa).

The segment at 1-230 (MASSKLAVIV…EAELLGVNAR (230 aa)) is pyrophosphorylase. Residues 11–14 (LAAG), Lys-25, Gln-74, 79–80 (GT), 102–104 (YGD), Gly-142, Glu-156, Asn-171, and Asn-228 each bind UDP-N-acetyl-alpha-D-glucosamine. Asp-104 lines the Mg(2+) pocket. Asn-228 is a binding site for Mg(2+). The linker stretch occupies residues 231-251 (SELAVAEALVQARLREAAMDN). The segment at 252-449 (GATLIDPATV…QQAAKKAKKD (198 aa)) is N-acetyltransferase. UDP-N-acetyl-alpha-D-glucosamine-binding residues include Arg-317 and Lys-335. Catalysis depends on His-347, which acts as the Proton acceptor. Tyr-350 and Asn-361 together coordinate UDP-N-acetyl-alpha-D-glucosamine. Acetyl-CoA-binding positions include Ala-364, 370–371 (NY), Ser-389, Ala-407, and Arg-424.

It in the N-terminal section; belongs to the N-acetylglucosamine-1-phosphate uridyltransferase family. The protein in the C-terminal section; belongs to the transferase hexapeptide repeat family. In terms of assembly, homotrimer. Mg(2+) serves as cofactor.

It localises to the cytoplasm. The catalysed reaction is alpha-D-glucosamine 1-phosphate + acetyl-CoA = N-acetyl-alpha-D-glucosamine 1-phosphate + CoA + H(+). It catalyses the reaction N-acetyl-alpha-D-glucosamine 1-phosphate + UTP + H(+) = UDP-N-acetyl-alpha-D-glucosamine + diphosphate. It participates in nucleotide-sugar biosynthesis; UDP-N-acetyl-alpha-D-glucosamine biosynthesis; N-acetyl-alpha-D-glucosamine 1-phosphate from alpha-D-glucosamine 6-phosphate (route II): step 2/2. It functions in the pathway nucleotide-sugar biosynthesis; UDP-N-acetyl-alpha-D-glucosamine biosynthesis; UDP-N-acetyl-alpha-D-glucosamine from N-acetyl-alpha-D-glucosamine 1-phosphate: step 1/1. The protein operates within bacterial outer membrane biogenesis; LPS lipid A biosynthesis. Catalyzes the last two sequential reactions in the de novo biosynthetic pathway for UDP-N-acetylglucosamine (UDP-GlcNAc). The C-terminal domain catalyzes the transfer of acetyl group from acetyl coenzyme A to glucosamine-1-phosphate (GlcN-1-P) to produce N-acetylglucosamine-1-phosphate (GlcNAc-1-P), which is converted into UDP-GlcNAc by the transfer of uridine 5-monophosphate (from uridine 5-triphosphate), a reaction catalyzed by the N-terminal domain. This chain is Bifunctional protein GlmU, found in Paramagnetospirillum magneticum (strain ATCC 700264 / AMB-1) (Magnetospirillum magneticum).